The primary structure comprises 129 residues: Small ribosomal subunit protein uS11 (129 aa).

The protein belongs to the universal ribosomal protein uS11 family. In terms of assembly, part of the 30S ribosomal subunit. Interacts with proteins S7 and S18. Binds to IF-3.

Functionally, located on the platform of the 30S subunit, it bridges several disparate RNA helices of the 16S rRNA. Forms part of the Shine-Dalgarno cleft in the 70S ribosome. The polypeptide is Small ribosomal subunit protein uS11 (Novosphingobium aromaticivorans (strain ATCC 700278 / DSM 12444 / CCUG 56034 / CIP 105152 / NBRC 16084 / F199)).